Consider the following 320-residue polypeptide: N-acetylneuraminate lyase (320 aa).

The aceneuramate site is built by threonine 51 and threonine 52. Tyrosine 143 functions as the Proton donor in the catalytic mechanism. Catalysis depends on lysine 173, which acts as the Schiff-base intermediate with substrate. Aceneuramate contacts are provided by serine 175, glycine 199, aspartate 201, glutamate 202, and serine 218.

It belongs to the DapA family. NanA subfamily. In terms of assembly, homotetramer.

It localises to the cytoplasm. The catalysed reaction is aceneuramate = aldehydo-N-acetyl-D-mannosamine + pyruvate. It functions in the pathway amino-sugar metabolism; N-acetylneuraminate degradation. Functionally, catalyzes the cleavage of N-acetylneuraminic acid (sialic acid) to form pyruvate and N-acetylmannosamine via a Schiff base intermediate. It prevents sialic acids from being recycled and returning to the cell surface. Involved in the N-glycolylneuraminic acid (Neu5Gc) degradation pathway. In Pongo abelii (Sumatran orangutan), this protein is N-acetylneuraminate lyase.